A 341-amino-acid polypeptide reads, in one-letter code: Hypophosphite import ATP-binding protein HtxD (341 aa).

The region spanning 6–249 is the ABC transporter domain; the sequence is LQLKNVGKSY…RVHALYQVPA (244 aa). Residue 38-45 participates in ATP binding; it reads GTSGAGKS. The segment at 278–341 is disordered; that stretch reads IHTPHTRAAP…TGRGQDRGPG (64 aa). 2 stretches are compositionally biased toward basic and acidic residues: residues 307–320 and 327–341; these read ADRR…DRTT and GGHD…RGPG.

Belongs to the ABC transporter superfamily. Phosphonates importer (TC 3.A.1.9.1) family. The complex is composed of two ATP-binding proteins (HtxD), two transmembrane proteins (HtxC and HtxE) and a solute-binding protein (HtxB).

It is found in the cell inner membrane. It catalyses the reaction phosphinate(out) + ATP + H2O = phosphinate(in) + ADP + phosphate + H(+). Its function is as follows. Part of the ABC transporter complex HtxBCDE involved in hypophosphite import. Responsible for energy coupling to the transport system. This chain is Hypophosphite import ATP-binding protein HtxD (htxD), found in Stutzerimonas stutzeri (Pseudomonas stutzeri).